A 600-amino-acid chain; its full sequence is Sodium- and chloride-dependent betaine transporter (600 aa).

A disordered region spans residues 1–31; that stretch reads MGTSEHVPLPTDEAKAKELEQSQHSEEPDRG. At 1-38 the chain is on the cytoplasmic side; it reads MGTSEHVPLPTDEAKAKELEQSQHSEEPDRGQWTGKFD. The span at 12 to 30 shows a compositional bias: basic and acidic residues; it reads DEAKAKELEQSQHSEEPDR. The next 3 helical transmembrane spans lie at 39-59, 68-88, and 116-136; these read FLMS…FPYL, FLVV…LMEV, and VVIA…AMFY. Residues 137–207 lie on the Extracellular side of the membrane; that stretch reads MISSIAWVFP…DTGDISEFGG (71 aa). An N-linked (GlcNAc...) asparagine glycan is attached at N165. A run of 2 helical transmembrane segments spans residues 208–228 and 237–257; these read IQWE…FALW and FVYF…IRGL. N-linked (GlcNAc...) asparagine glycosylation is present at N273. Helical transmembrane passes span 286–306, 321–341, 378–398, 420–440, 454–474, 499–519, and 536–556; these read AGTQ…ALGS, MCFI…SILG, VFAV…QVCM, SLGI…THSG, GYAL…GFGA, FCAP…YHPV, and WFLS…YLFF. Over 557-600 the chain is Cytoplasmic; sequence TNKHLTLKERVRKGLNLDGSFESPAKKNLVNNAEELKFIESSSQ.

The protein belongs to the sodium:neurotransmitter symporter (SNF) family. As to expression, highly expressed in the head, the excretory canal, tail hypodermal cells, epidermis and vulval epithelial cells. Expressed in the excretory canal-associated neuron and in some non-amphidial sensory neurons in the head (at protein level).

Its subcellular location is the cell membrane. Betaine transporter dependent on Na(+) and Cl(-) ions that functions primarily in the epidermis to clear betaine from the extracellular space. Elicits current in response to betaine but not in response to GABA, L-carnitine, sarcosine, glycine or dimethylglycine. This chain is Sodium- and chloride-dependent betaine transporter, found in Caenorhabditis elegans.